The sequence spans 2126 residues: Polycystin family receptor for egg jelly (2126 aa).

Residues Met-1 to Ser-18 form the signal peptide. Over Gln-19–Pro-1068 the chain is Extracellular. The interval Pro-20–Cys-71 is disordered. N-linked (GlcNAc...) asparagine glycans are attached at residues Asn-84, Asn-94, Asn-129, Asn-192, Asn-243, Asn-325, Asn-571, Asn-761, Asn-774, Asn-807, Asn-849, Asn-888, Asn-960, and Asn-1063. One can recognise an REJ domain in the interval Cys-102 to Asp-797. Residues Ala-1069 to Leu-1089 form a helical membrane-spanning segment. The Cytoplasmic portion of the chain corresponds to His-1090–Arg-1273. Residues Leu-1114 to Asn-1231 form the PLAT domain. Residues Leu-1274–Leu-1294 form a helical membrane-spanning segment. Residues Asn-1295–Met-1311 lie on the Extracellular side of the membrane. A helical membrane pass occupies residues Leu-1312–Phe-1332. At Thr-1333–Cys-1449 the chain is on the cytoplasmic side. A disordered region spans residues Arg-1379 to Pro-1431. Over residues Pro-1387–Asp-1403 the composition is skewed to basic and acidic residues. The chain crosses the membrane as a helical span at residues Val-1450–Phe-1470. Residues Tyr-1471 to Trp-1483 are Extracellular-facing. The chain crosses the membrane as a helical span at residues Leu-1484–Leu-1504. Topologically, residues Leu-1505 to Ser-1580 are cytoplasmic. The chain crosses the membrane as a helical span at residues Phe-1581–Ile-1601. The Extracellular segment spans residues Phe-1602–Ile-1838. N-linked (GlcNAc...) asparagine glycosylation is found at Asn-1607, Asn-1676, Asn-1766, and Asn-1817. A helical transmembrane segment spans residues Tyr-1839 to Ile-1859. The Cytoplasmic portion of the chain corresponds to Arg-1860–Asn-1875. Residues Phe-1876–Ala-1896 traverse the membrane as a helical segment. Residues Thr-1897 to Arg-1918 lie on the Extracellular side of the membrane. A helical transmembrane segment spans residues Val-1919 to Leu-1939. Residues Arg-1940–His-1964 are Cytoplasmic-facing. The chain crosses the membrane as a helical span at residues Thr-1965 to Gly-1985. Over Gln-1986 to Val-2019 the chain is Extracellular. The helical transmembrane segment at Leu-2020–Phe-2040 threads the bilayer. The Cytoplasmic portion of the chain corresponds to Gln-2041–Val-2126.

This sequence belongs to the polycystin family. In terms of tissue distribution, exclusively expressed in testis.

The protein localises to the cell membrane. It is found in the cytoplasmic vesicle. The protein resides in the secretory vesicle. It localises to the acrosome membrane. Its subcellular location is the nucleus. Testis-specific protein that controls sperm transport and the timing of zona pellucida-evoked exocytosis of the sperm acrosome. The polypeptide is Polycystin family receptor for egg jelly (Pkdrej) (Mus musculus (Mouse)).